The following is a 507-amino-acid chain: Phosphoprotein (507 aa).

An interaction with N0 region spans residues 1–48 (MAEEQARHVKNGLECIRALKAEPIGSLAIGEAMAAWSEISDNPGQEQA). 4 disordered regions span residues 40–98 (SDNP…FPSR), 134–174 (GLDG…APIS), 201–231 (NNFPKLGKTLNVPPPPDPGRASTSETPIKKG), and 251–305 (ATQC…KGGD). Ser-86 carries the post-translational modification Phosphoserine. Positions 134 to 145 (GLDGDSTLSGGD) are enriched in low complexity. Positions 146–160 (NESENSDVDIGEPDT) are enriched in acidic residues. Position 151 is a phosphoserine (Ser-151). Low complexity predominate over residues 260 to 270 (SEPSGPGAPAG). Polar residues predominate over residues 279–300 (AALTQEWTPESGTTISPRSQNK). The multimerization stretch occupies residues 304–376 (GDYYDDELFS…LSSIMIAIPG (73 aa)). Interaction with the L polymerase stretches follow at residues 361-377 (STLEGHLSSIMIAIPGL) and 396-410 (PIIGRDSGRALAEVL). Positions 457–507 (GPASRSVIRSIIKSSRIEEDRKRYLMTLLDDIKGANDLAKFHQMLMKIIMK) are x domain (XD). The interval 459 to 507 (ASRSVIRSIIKSSRIEEDRKRYLMTLLDDIKGANDLAKFHQMLMKIIMK) is interaction with the nucleocapsid (N-RNA).

The protein belongs to the morbillivirus P protein family. In terms of assembly, homotetramer. Interacts (via multimerization domain and XD domain) with polymerase L; this interaction forms the polymerase L-P complex. Interacts (via N-terminus) with N0 (via Ncore); this interaction allows P to chaperon N0 to avoid N polymerization and non-specific RNA binding before encapsidation. Interacts (via C-terminus) with N-RNA template (via Ntail); this interaction maintains the P/L complex anchored to the nucleocapsid template during the sequential transcription. Interacts (via C-terminus) with protein C this interaction allows C to associate with the ribonucleocapsid. Post-translationally, phosphorylation on serines by host CK2 is necessary for the formation of viral factories.

Its function is as follows. Essential cofactor of the RNA polymerase L that plays a central role in the transcription and replication by forming the polymerase complex with RNA polymerase L and recruiting L to the genomic N-RNA template for RNA synthesis. Also plays a central role in the encapsidation of nascent RNA chains by forming the encapsidation complex with the nucleocapsid protein N (N-P complex). Acts as a chaperone for newly synthesized free N protein, so-called N0, allowing encapsidation of nascent RNA chains during replication. The nucleoprotein protein N prevents excessive phosphorylation of P, which leads to down-regulation of viral transcription/ replication. Participates, together with N, in the formation of viral factories (viroplasms), which are large inclusions in the host cytoplasm where replication takes place. This Homo sapiens (Human) protein is Phosphoprotein (P/V).